The chain runs to 69 residues: Dodecin (69 aa).

3-5 is an FMN binding site; that stretch reads KVY. CoA is bound by residues Lys-6, Arg-28, and 32–34; that span reads TLR. FMN is bound by residues Asp-37, Trp-38, Arg-45, Gln-57, and Arg-65. 65 to 67 contacts CoA; sequence RLE.

The protein belongs to the dodecin family. Homododecamer; four homotrimers assemble to form a dodecameric hollow sphere with an outer diameter of about 60 Angstroms. Flavin dimers are bound between subunits with a stoichiometry of 6 flavin dimers per dodecamer. Besides, trimeric coenzyme A molecules can be bound between subunits. A dodecamer can bind simultaneously 12 flavin and 12 coenzyme A molecules.

In terms of biological role, may function as storage protein that sequesters various flavins and other cofactors, thereby protecting the cell against undesirable reactions mediated by the free cofactors. Binds and sequesters FMN, FAD, lumiflavin and lumichrome, and can also bind coenzyme A. The protein is Dodecin of Thermus thermophilus (strain ATCC 27634 / DSM 579 / HB8).